Here is a 363-residue protein sequence, read N- to C-terminus: Cytochrome b (363 aa).

Helical transmembrane passes span 24–44, 68–90, 105–125, and 171–191; these read VGFS…CLAW, FVIR…IHIF, VWFI…IGYV, and LHVL…LHLF. Heme b is bound by residues His74 and His88. Heme b is bound by residues His175 and His189. Position 194 (His194) interacts with a ubiquinone. The next 4 membrane-spanning stretches (helical) occupy residues 219 to 239, 287 to 307, 321 to 341, and 342 to 362; these read FYLR…YVIF, FLMV…ILWF, LILF…VLAY, and PIWM…VCRL.

Belongs to the cytochrome b family. In terms of assembly, the main subunits of complex b-c1 are: cytochrome b, cytochrome c1 and the Rieske protein. It depends on heme b as a cofactor.

It localises to the mitochondrion inner membrane. Functionally, component of the ubiquinol-cytochrome c reductase complex (complex III or cytochrome b-c1 complex) that is part of the mitochondrial respiratory chain. The b-c1 complex mediates electron transfer from ubiquinol to cytochrome c. Contributes to the generation of a proton gradient across the mitochondrial membrane that is then used for ATP synthesis. This chain is Cytochrome b (MT-CYB), found in Trypanosoma brucei brucei.